The chain runs to 239 residues: Large ribosomal subunit protein uL2 (239 aa).

Disordered stretches follow at residues 1-28 (MGKR…VGPA) and 199-239 (SHPH…RRKG). Basic residues predominate over residues 225–239 (KVGHIAARRTGRRKG).

This sequence belongs to the universal ribosomal protein uL2 family. Part of the 50S ribosomal subunit. Forms a bridge to the 30S subunit in the 70S ribosome.

In terms of biological role, one of the primary rRNA binding proteins. Required for association of the 30S and 50S subunits to form the 70S ribosome, for tRNA binding and peptide bond formation. It has been suggested to have peptidyltransferase activity; this is somewhat controversial. Makes several contacts with the 16S rRNA in the 70S ribosome. This chain is Large ribosomal subunit protein uL2, found in Staphylothermus marinus (strain ATCC 43588 / DSM 3639 / JCM 9404 / F1).